Consider the following 210-residue polypeptide: Cilia- and flagella-associated protein 418 (210 aa).

Positions 1 to 77 are required for interaction with FAM161A; the sequence is MAKDLDELLD…LINEIFEEPN (77 aa). Residues 24–59 form a disordered region; it reads LDLGERPKGGSGGGGTHSGDRNGAQEKDTLRSTETF. Basic and acidic residues predominate over residues 41-59; the sequence is SGDRNGAQEKDTLRSTETF.

In terms of assembly, interacts (via N-terminus) with FAM161A (via central region); the interaction is direct.

It localises to the cytoplasm. The protein localises to the photoreceptor inner segment. Its function is as follows. May be involved in photoreceptor outer segment disk morphogenesis. The protein is Cilia- and flagella-associated protein 418 of Rattus norvegicus (Rat).